Here is a 183-residue protein sequence, read N- to C-terminus: Cell division protein ZapC (183 aa).

The protein belongs to the ZapC family. In terms of assembly, interacts directly with FtsZ.

The protein localises to the cytoplasm. In terms of biological role, contributes to the efficiency of the cell division process by stabilizing the polymeric form of the cell division protein FtsZ. Acts by promoting interactions between FtsZ protofilaments and suppressing the GTPase activity of FtsZ. The protein is Cell division protein ZapC of Xenorhabdus bovienii (strain SS-2004) (Xenorhabdus nematophila subsp. bovienii).